Consider the following 311-residue polypeptide: Ribosomal RNA small subunit methyltransferase H (311 aa).

S-adenosyl-L-methionine-binding positions include Gly33–His35, Asp51, Phe78, Asp99, and Gln106. The tract at residues Glu289–Ala311 is disordered.

The protein belongs to the methyltransferase superfamily. RsmH family.

Its subcellular location is the cytoplasm. The catalysed reaction is cytidine(1402) in 16S rRNA + S-adenosyl-L-methionine = N(4)-methylcytidine(1402) in 16S rRNA + S-adenosyl-L-homocysteine + H(+). In terms of biological role, specifically methylates the N4 position of cytidine in position 1402 (C1402) of 16S rRNA. This is Ribosomal RNA small subunit methyltransferase H from Carboxydothermus hydrogenoformans (strain ATCC BAA-161 / DSM 6008 / Z-2901).